A 130-amino-acid polypeptide reads, in one-letter code: 3-hydroxyisobutyrate dehydrogenase, mitochondrial (130 aa).

NAD(+)-binding positions include 1 to 17, 25 to 26, and N30; these read TPVGFIGLGNMGNPMAK and LP. Position 43 is an N6-acetyllysine (K43). An N6-acetyllysine; alternate modification is found at K47. The residue at position 47 (K47) is an N6-succinyllysine; alternate. An N6-succinyllysine modification is found at K101.

Belongs to the HIBADH-related family. 3-hydroxyisobutyrate dehydrogenase subfamily. In terms of assembly, homodimer.

It localises to the mitochondrion. It catalyses the reaction 3-hydroxy-2-methylpropanoate + NAD(+) = 2-methyl-3-oxopropanoate + NADH + H(+). It functions in the pathway amino-acid degradation; L-valine degradation. The sequence is that of 3-hydroxyisobutyrate dehydrogenase, mitochondrial from Mesocricetus auratus (Golden hamster).